The following is a 529-amino-acid chain: ATP synthase F(1) complex subunit beta, mitochondrial (529 aa).

A mitochondrion-targeting transit peptide spans Met1 to Ala47. Ser106 carries an O-linked (GlcNAc) serine glycan. N6-acetyllysine; alternate occurs at positions 124, 133, and 161. Residues Lys124, Lys133, and Lys161 each carry the N6-succinyllysine; alternate modification. An N6-acetyllysine modification is found at Lys198. The ADP site is built by Gly209, Val210, Gly211, Lys212, Thr213, and Val214. Position 209 (Gly209) interacts with ATP. Residues Gly209, Val210, Gly211, Lys212, and Thr213 each coordinate phosphate. Gly211, Lys212, Thr213, and Val214 together coordinate ATP. Residue Thr213 coordinates Mg(2+). A Mg(2+)-binding site is contributed by Glu238. Arg239 serves as a coordination point for ATP. An N6-acetyllysine; alternate mark is found at Lys259 and Lys264. 2 positions are modified to N6-succinyllysine; alternate: Lys259 and Lys264. Position 312 is a phosphothreonine (Thr312). Ser415 bears the Phosphoserine mark. N6-acetyllysine is present on Lys426. Position 433 is a phosphoserine (Ser433). N6-acetyllysine occurs at positions 480 and 485. Lys522 is modified (N6-acetyllysine; alternate). Lys522 carries the N6-succinyllysine; alternate modification. Ser529 bears the Phosphoserine mark.

The protein belongs to the ATPase alpha/beta chains family. In terms of assembly, homotrimer. Component of the ATP synthase complex composed at least of ATP5F1A/subunit alpha, ATP5F1B/subunit beta, ATP5MC1/subunit c (homooctomer), MT-ATP6/subunit a, MT-ATP8/subunit 8, ATP5ME/subunit e, ATP5MF/subunit f, ATP5MG/subunit g, ATP5MK/subunit k, ATP5MJ/subunit j, ATP5F1C/subunit gamma, ATP5F1D/subunit delta, ATP5F1E/subunit epsilon, ATP5PF/subunit F6, ATP5PB/subunit b, ATP5PD/subunit d, ATP5PO/subunit OSCP. ATP synthase complex consists of a soluble F(1) head domain (subunits alpha(3) and beta(3)) - the catalytic core - and a membrane F(0) domain - the membrane proton channel (subunits c, a, 8, e, f, g, k and j). These two domains are linked by a central stalk (subunits gamma, delta, and epsilon) rotating inside the F1 region and a stationary peripheral stalk (subunits F6, b, d, and OSCP). Interacts with PPIF. Interacts with BCL2L1 isoform BCL-X(L); the interaction mediates the association of BCL2L1 isoform BCL-X(L) with the mitochondrial membrane F(1)F(0) ATP synthase and enhances neurons metabolic efficiency. Interacts with CLN5 and PPT1. Interacts with S100A1; this interaction increases F1-ATPase activity. Interacts with MTLN. Interacts with TTC5/STRAP; the interaction results in decreased mitochondrial ATP production. The cofactor is Mg(2+).

The protein localises to the mitochondrion inner membrane. The catalysed reaction is ATP + H2O + 4 H(+)(in) = ADP + phosphate + 5 H(+)(out). Functionally, catalytic subunit beta, of the mitochondrial membrane ATP synthase complex (F(1)F(0) ATP synthase or Complex V) that produces ATP from ADP in the presence of a proton gradient across the membrane which is generated by electron transport complexes of the respiratory chain. ATP synthase complex consist of a soluble F(1) head domain - the catalytic core - and a membrane F(1) domain - the membrane proton channel. These two domains are linked by a central stalk rotating inside the F(1) region and a stationary peripheral stalk. During catalysis, ATP synthesis in the catalytic domain of F(1) is coupled via a rotary mechanism of the central stalk subunits to proton translocation. In vivo, can only synthesize ATP although its ATP hydrolase activity can be activated artificially in vitro. With the subunit alpha (ATP5F1A), forms the catalytic core in the F(1) domain. The polypeptide is ATP synthase F(1) complex subunit beta, mitochondrial (Homo sapiens (Human)).